Consider the following 482-residue polypeptide: uncharacterized protein (482 aa).

An HTH gntR-type domain is found at 12–80 (LPKYRQIVHF…MGKGTVVINN (69 aa)). The H-T-H motif DNA-binding region spans 40–59 (QRTLAKDFQVNRSTVITALE). Position 325 is an N6-(pyridoxal phosphate)lysine (lysine 325).

In the C-terminal section; belongs to the class-I pyridoxal-phosphate-dependent aminotransferase family. Requires pyridoxal 5'-phosphate as cofactor.

This is an uncharacterized protein from Bacillus subtilis (strain 168).